A 912-amino-acid polypeptide reads, in one-letter code: LPS-assembly protein LptD (912 aa).

The signal sequence occupies residues 1–27; the sequence is MLYSPLYQSIRLILFGALGLSSLTVSA.

Belongs to the LptD family. As to quaternary structure, component of the lipopolysaccharide transport and assembly complex. Interacts with LptE and LptA.

The protein localises to the cell outer membrane. Together with LptE, is involved in the assembly of lipopolysaccharide (LPS) at the surface of the outer membrane. This is LPS-assembly protein LptD from Psychrobacter arcticus (strain DSM 17307 / VKM B-2377 / 273-4).